The following is a 517-amino-acid chain: Carotenoid phi-ring synthase (517 aa).

The disordered stretch occupies residues 1 to 24 (MFARDSGRGHRHGRDRQAAVVPAP). FAD is bound by residues alanine 45, 64–65 (ER), arginine 72, tyrosine 99, aspartate 461, and methionine 472.

This sequence belongs to the carotenoid/retinoid oxidoreductase family. It depends on FAD as a cofactor.

It catalyses the reaction a carotenoid beta-end derivative + 2 A = a carotenoid phi-end derivative + 2 AH2. Its pathway is carotenoid biosynthesis. In terms of biological role, involved in the biosynthesis of isorenieratene, a carotenoid with aromatic end groups. Catalyzes the introduction of two additional double bonds into each ionone ring of beta-carotene to produce isorenieratene. The reaction includes an intramolecular methyl transfer from position C1 to position C2 of the ring. This chain is Carotenoid phi-ring synthase, found in Streptomyces griseus.